The sequence spans 67 residues: Large ribosomal subunit protein bL32 (67 aa).

Basic residues predominate over residues 1–19; sequence MAVPKRKMSRANTRMRRSQ. Residues 1–22 are disordered; sequence MAVPKRKMSRANTRMRRSQWKA.

The protein belongs to the bacterial ribosomal protein bL32 family.

This chain is Large ribosomal subunit protein bL32, found in Kocuria rhizophila (strain ATCC 9341 / DSM 348 / NBRC 103217 / DC2201).